The primary structure comprises 91 residues: Small ribosomal subunit protein uS19 (91 aa).

The protein belongs to the universal ribosomal protein uS19 family.

In terms of biological role, protein S19 forms a complex with S13 that binds strongly to the 16S ribosomal RNA. The polypeptide is Small ribosomal subunit protein uS19 (Psychrobacter sp. (strain PRwf-1)).